The sequence spans 116 residues: Large ribosomal subunit protein bL17 (116 aa).

It belongs to the bacterial ribosomal protein bL17 family. Part of the 50S ribosomal subunit. Contacts protein L32.

The chain is Large ribosomal subunit protein bL17 from Synechococcus sp. (strain JA-2-3B'a(2-13)) (Cyanobacteria bacterium Yellowstone B-Prime).